The sequence spans 347 residues: Globoside alpha-1,3-N-acetylgalactosaminyltransferase 1 (347 aa).

Topologically, residues 1-6 are cytoplasmic; the sequence is MTRPRL. The helical; Signal-anchor for type II membrane protein transmembrane segment at 7 to 27 threads the bilayer; that stretch reads AQGLAFFLLGGTGLWVLWKFI. Residues 28–347 lie on the Lumenal side of the membrane; sequence KDWLLVSYIP…VKKNANWLRT (320 aa). N-linked (GlcNAc...) asparagine glycosylation occurs at N108. Substrate-binding positions include 116–121, 206–208, and 228–231; these read FAVGKY, DVD, and HPGY. Residues D206 and D208 each coordinate Mn(2+). E298 (nucleophile) is an active-site residue.

The protein belongs to the glycosyltransferase 6 family. Requires Mn(2+) as cofactor.

The protein localises to the golgi apparatus membrane. It catalyses the reaction a globoside Gb4Cer (d18:1(4E)) + UDP-N-acetyl-alpha-D-galactosamine = a globoside Forssman (d18:1(4E)) + UDP + H(+). The enzyme catalyses a globoside Gb4Cer + UDP-N-acetyl-alpha-D-galactosamine = a globoside IV3GalNAc-Gb4Cer + UDP + H(+). Its pathway is protein modification; protein glycosylation. Functionally, catalyzes the formation of Forssman glycolipid via the addition of N-acetylgalactosamine (GalNAc) in alpha-1,3-linkage to GalNAcb-1,3Gala-1,4Galb-1,4GlcCer (Gb4Cer). Forssman glycolipid (also called Forssman antigen; FG) probably serves for adherence of some pathogens. Conversely, it diminishes Shiga toxins susceptibility. In Mus musculus (Mouse), this protein is Globoside alpha-1,3-N-acetylgalactosaminyltransferase 1.